The chain runs to 114 residues: uncharacterized protein (114 aa).

A signal peptide spans 1–19 (MKASYLVLIFISIFSMAQA). S41 is modified (phosphoserine).

The protein belongs to the protease inhibitor I9 family.

This is an uncharacterized protein from Saccharomyces cerevisiae (strain ATCC 204508 / S288c) (Baker's yeast).